A 590-amino-acid chain; its full sequence is DELLA protein GAI1 (590 aa).

Positions 1-10 are enriched in basic residues; the sequence is MKREYHHPHH. The disordered stretch occupies residues 1 to 28; that stretch reads MKREYHHPHHPTCSTSPTGKGKMWDADP. The short motif at 35 to 39 is the DELLA motif element; it reads DELLA. The interval 153–182 is disordered; sequence HIEQPPQQPPAPPLYQRDNKRLKPTTSATA. The region spanning 205-575 is the GRAS domain; the sequence is VDSQETGIRL…RPLIATSAWQ (371 aa). Positions 212–266 are leucine repeat I (LRI); that stretch reads IRLVHTLMACAEAVQQENLKLAEALVKQIGFLAVSQAGAMRKVATYFAEGLARRI. Residues 284-349 are VHIID; that stretch reads QMHFYETCPY…GGPPSFRLTG (66 aa). Positions 315 to 319 match the VHIID motif; it reads VHVID. Residues 363–395 are leucine repeat II (LRII); that stretch reads EVGWKLAQLAETIHVEFEYRGFVANSLADLDAS. The interval 405 to 496 is PFYRE; sequence VAVNSVFELH…EVYLGQQICN (92 aa). The LXXLL motif motif lies at 413-417; sequence LHSLL. Residues 499–575 are SAW; the sequence is ACEGPERVER…RPLIATSAWQ (77 aa).

It belongs to the GRAS family. DELLA subfamily. Post-translationally, phosphorylated. In terms of processing, ubiquitinated. Upon GA application it is ubiquitinated, leading to its subsequent degradation.

Its subcellular location is the nucleus. In terms of biological role, probable transcriptional regulator that acts as a repressor of the gibberellin (GA) signaling pathway. Probably acts by participating in large multiprotein complexes that repress transcription of GA-inducible genes. Upon GA application, it is degraded by the proteasome, allowing the GA signaling pathway. The protein is DELLA protein GAI1 (GAI1) of Vitis vinifera (Grape).